Here is a 336-residue protein sequence, read N- to C-terminus: MLPLTYVVKAFSIGLFFSLFLMKPLISWLKKQGFQDHIHKDHCEKLEELHKDKAYIPTAGGIVFVFASVLAVLLLFPIQLWSTWFCIGTILLWGALGWCDDQIKNRRRVGHGLSAKHKFLIQNCLAAGVVLPIMFAYKESFLSFHLPFLGIVSLPHHWWSYLLSFAIATLAIVGTSNSVNLTDGLDGLAAGAMVIACLGMLVVACTNGAPWAFICCVLLATLAGSCLGFLRYNKSPARVFMGDTGSLFLGAMLGMCAVLLRAEFLLLFMGGIFVLESLSVIVQVGSYKLRKKRVFLCAPLHHHYEYKGLSEKAVVRNFLIVELICVVVGIIAVFVD.

The next 10 membrane-spanning stretches (helical) occupy residues 1-21 (MLPL…SLFL), 56-76 (IPTA…LLLF), 78-98 (IQLW…ALGW), 124-144 (CLAA…FLSF), 148-168 (FLGI…FAIA), 184-204 (GLDG…LVVA), 210-230 (PWAF…LGFL), 239-259 (VFMG…CAVL), 264-284 (FLLL…IVQV), and 314-334 (VVRN…IAVF).

Belongs to the glycosyltransferase 4 family. MraY subfamily. It depends on Mg(2+) as a cofactor.

It localises to the cell inner membrane. The enzyme catalyses UDP-N-acetyl-alpha-D-muramoyl-L-alanyl-gamma-D-glutamyl-meso-2,6-diaminopimeloyl-D-alanyl-D-alanine + di-trans,octa-cis-undecaprenyl phosphate = di-trans,octa-cis-undecaprenyl diphospho-N-acetyl-alpha-D-muramoyl-L-alanyl-D-glutamyl-meso-2,6-diaminopimeloyl-D-alanyl-D-alanine + UMP. Its pathway is cell wall biogenesis; peptidoglycan biosynthesis. Functionally, catalyzes the initial step of the lipid cycle reactions in the biosynthesis of the cell wall peptidoglycan: transfers peptidoglycan precursor phospho-MurNAc-pentapeptide from UDP-MurNAc-pentapeptide onto the lipid carrier undecaprenyl phosphate, yielding undecaprenyl-pyrophosphoryl-MurNAc-pentapeptide, known as lipid I. The polypeptide is Phospho-N-acetylmuramoyl-pentapeptide-transferase (Chlamydia trachomatis serovar L2b (strain UCH-1/proctitis)).